The primary structure comprises 169 residues: Crossover junction endodeoxyribonuclease RuvC (169 aa).

Residues Asp-12, Glu-72, and Asp-144 contribute to the active site. 3 residues coordinate Mg(2+): Asp-12, Glu-72, and Asp-144.

This sequence belongs to the RuvC family. As to quaternary structure, homodimer which binds Holliday junction (HJ) DNA. The HJ becomes 2-fold symmetrical on binding to RuvC with unstacked arms; it has a different conformation from HJ DNA in complex with RuvA. In the full resolvosome a probable DNA-RuvA(4)-RuvB(12)-RuvC(2) complex forms which resolves the HJ. Mg(2+) is required as a cofactor.

It is found in the cytoplasm. It catalyses the reaction Endonucleolytic cleavage at a junction such as a reciprocal single-stranded crossover between two homologous DNA duplexes (Holliday junction).. Functionally, the RuvA-RuvB-RuvC complex processes Holliday junction (HJ) DNA during genetic recombination and DNA repair. Endonuclease that resolves HJ intermediates. Cleaves cruciform DNA by making single-stranded nicks across the HJ at symmetrical positions within the homologous arms, yielding a 5'-phosphate and a 3'-hydroxyl group; requires a central core of homology in the junction. The consensus cleavage sequence is 5'-(A/T)TT(C/G)-3'. Cleavage occurs on the 3'-side of the TT dinucleotide at the point of strand exchange. HJ branch migration catalyzed by RuvA-RuvB allows RuvC to scan DNA until it finds its consensus sequence, where it cleaves and resolves the cruciform DNA. This chain is Crossover junction endodeoxyribonuclease RuvC, found in Xanthobacter autotrophicus (strain ATCC BAA-1158 / Py2).